A 133-amino-acid chain; its full sequence is uncharacterized protein (133 aa).

Residues 107-133 (TSHHRAAGLQSQHAPGSGRVRITGGKV) form a disordered region.

This is an uncharacterized protein from Homo sapiens (Human).